The primary structure comprises 141 residues: Hemoglobin subunit alpha (141 aa).

The Globin domain maps to 1-141 (VLSSADKANI…VSTVLTSKYR (141 aa)). At serine 3 the chain carries Phosphoserine. N6-succinyllysine is present on residues lysine 7 and lysine 11. Lysine 16 is modified (N6-acetyllysine; alternate). Lysine 16 carries the post-translational modification N6-succinyllysine; alternate. At tyrosine 24 the chain carries Phosphotyrosine. An N6-succinyllysine modification is found at lysine 40. Phosphoserine is present on serine 49. Residue histidine 58 coordinates O2. Histidine 87 is a binding site for heme b. At serine 102 the chain carries Phosphoserine. Residue threonine 108 is modified to Phosphothreonine. Residues serine 124 and serine 131 each carry the phosphoserine modification. Phosphothreonine is present on residues threonine 134 and threonine 137. Position 138 is a phosphoserine (serine 138).

This sequence belongs to the globin family. Heterotetramer of two alpha chains and two beta chains. Red blood cells.

Involved in oxygen transport from the lung to the various peripheral tissues. In terms of biological role, hemopressin acts as an antagonist peptide of the cannabinoid receptor CNR1. Hemopressin-binding efficiently blocks cannabinoid receptor CNR1 and subsequent signaling. This chain is Hemoglobin subunit alpha (HBA), found in Proteles cristata (Aardwolf).